Here is a 77-residue protein sequence, read N- to C-terminus: Acyl carrier protein (77 aa).

The region spanning 1–76 is the Carrier domain; it reads MSLEDDVKSI…DVITYIKTRQ (76 aa). An O-(pantetheine 4'-phosphoryl)serine modification is found at Ser36.

The protein belongs to the acyl carrier protein (ACP) family. 4'-phosphopantetheine is transferred from CoA to a specific serine of apo-ACP by AcpS. This modification is essential for activity because fatty acids are bound in thioester linkage to the sulfhydryl of the prosthetic group.

The protein resides in the cytoplasm. Its pathway is lipid metabolism; fatty acid biosynthesis. In terms of biological role, carrier of the growing fatty acid chain in fatty acid biosynthesis. This is Acyl carrier protein from Chlamydia caviae (strain ATCC VR-813 / DSM 19441 / 03DC25 / GPIC) (Chlamydophila caviae).